The primary structure comprises 346 residues: Upstream stimulatory factor 2 (346 aa).

2 disordered regions span residues 1–44 (MDML…PGAE) and 215–244 (APRTHPYSPKIDGTRTPRDERRRAQHNEVE). Low complexity predominate over residues 11 to 20 (AASATAAAAA). Basic and acidic residues predominate over residues 226–244 (DGTRTPRDERRRAQHNEVE). In terms of domain architecture, bHLH spans 235–290 (RRRAQHNEVERRRRDKINNWIVQLSKIIPDCNADNSKTGASKGGILSKACDYIREL). The interval 307–328 (LQMDNELLRQQIEELKNENALL) is leucine-zipper.

Interacts with MAF. Efficient DNA binding requires dimerization with another bHLH protein. Binds DNA as a homodimer or a heterodimer (USF1/USF2). In vivo, the USF1/USF2A heterodimer represents over 66% of the usf binding activity whereas the USF1 and USF2A homodimers represent less than 10%. The USF1/USF2B heterodimer accounted for almost 15% in some cell. As to expression, ubiquitous.

The protein resides in the nucleus. Transcription factor that binds to a symmetrical DNA sequence (E-boxes) (5'-CACGTG-3') that is found in a variety of viral and cellular promoters. The chain is Upstream stimulatory factor 2 (USF2) from Homo sapiens (Human).